A 513-amino-acid polypeptide reads, in one-letter code: Abl interactor 2 (513 aa).

The residue at position 40 (serine 40) is a Phosphoserine. The t-SNARE coiled-coil homology domain occupies arginine 45–arginine 107. Positions lysine 167 to alanine 431 are disordered. The span at threonine 174–proline 185 shows a compositional bias: pro residues. Phosphoserine is present on residues serine 183 and serine 227. Over residues proline 217 to tyrosine 241 the composition is skewed to polar residues. The segment covering serine 242–alanine 272 has biased composition (low complexity). Positions valine 273–phenylalanine 282 are enriched in pro residues. Low complexity predominate over residues proline 283–asparagine 325. Threonine 361 is modified (phosphothreonine). Serine 368 is subject to Phosphoserine. The segment covering serine 376–serine 399 has biased composition (polar residues). Residues aspartate 400–glutamate 409 show a composition bias toward pro residues. Residues serine 451–histidine 510 enclose the SH3 domain.

Belongs to the ABI family. In terms of assembly, component of the WAVE complex composed of ABI2, CYFIP1 or CYFIP2, BRK1, NCKAP1 and WASF1/WAVE1. Within the complex, a heterodimer containing NCKAP1 and CYFIP1 interacts with a heterotrimer formed by WAVE1, ABI2 and BRK1. CYFIP2 binds to activated RAC1 which causes the complex to dissociate, releasing activated WASF1. Interacts (via SH3 domain) with ABL1 and ABL2. (Microbial infection) Interacts with human cytomegalovirus UL135. In terms of processing, phosphorylated by ABL1. In terms of tissue distribution, widely expressed. Abundant in testes, ovary, thymus, and colon, with lower but detectable levels in prostate, peripheral blood leukocytes, and spleen.

The protein localises to the cytoplasm. It is found in the nucleus. The protein resides in the cell projection. Its subcellular location is the lamellipodium. It localises to the filopodium. The protein localises to the cytoskeleton. It is found in the cell junction. The protein resides in the adherens junction. Regulator of actin cytoskeleton dynamics underlying cell motility and adhesion. Functions as a component of the WAVE complex, which activates actin nucleating machinery Arp2/3 to drive lamellipodia formation. Acts as a regulator and substrate of nonreceptor tyrosine kinases ABL1 and ABL2 involved in processes linked to cell growth and differentiation. Positively regulates ABL1-mediated phosphorylation of ENAH, which is required for proper polymerization of nucleated actin filaments at the leading edge. Contributes to the regulation of actin assembly at the tips of neuron projections. In particular, controls dendritic spine morphogenesis and may promote dendritic spine specification toward large mushroom-type spines known as repositories of memory in the brain. In hippocampal neurons, may mediate actin-dependent BDNF-NTRK2 early endocytic trafficking that triggers dendrite outgrowth. Participates in ocular lens morphogenesis, likely by regulating lamellipodia-driven adherens junction formation at the epithelial cell-secondary lens fiber interface. Also required for nascent adherens junction assembly in epithelial cells. In Homo sapiens (Human), this protein is Abl interactor 2.